Consider the following 256-residue polypeptide: Eukaryotic translation initiation factor 3 subunit J (256 aa).

A sufficient for interaction with EIF3B region spans residues 1 to 67 (MAAAAAGDSD…KEEAEVKPEV (67 aa)). The interval 1-106 (MAAAAAGDSD…LEEPEEPKVL (106 aa)) is disordered. A phosphoserine mark is found at Ser-9, Ser-11, and Ser-18. A compositionally biased stretch (acidic residues) spans 38-57 (EGEDEDEDVKDNWDDDDDEK). Basic and acidic residues predominate over residues 58–104 (KEEAEVKPEVKISEKKKIAEKIKEKERQQKKRQEEIKKRLEEPEEPK). The stretch at 68–133 (KISEKKKIAE…ESDLELAKET (66 aa)) forms a coiled coil. A Glycyl lysine isopeptide (Lys-Gly) (interchain with G-Cter in SUMO2) cross-link involves residue Lys-104. Residue Thr-107 is modified to Phosphothreonine. Ser-125 is subject to Phosphoserine. Positions 214-243 (QSKAKKKKKGVVPGGGLKATMKDDLADYGG) are disordered. The segment at 241–256 (YGGYDGGYAQDYEDFM) is promotes stable association with the 40S ribosome. Position 252 is a phosphotyrosine (Tyr-252).

The protein belongs to the eIF-3 subunit J family. In terms of assembly, component of the eukaryotic translation initiation factor 3 (eIF-3) complex, which is composed of 13 subunits: EIF3A, EIF3B, EIF3C, EIF3D, EIF3E, EIF3F, EIF3G, EIF3H, EIF3I, EIF3J, EIF3K, EIF3L and EIF3M. The eIF-3 complex appears to include 3 stable modules: module A is composed of EIF3A, EIF3B, EIF3G and EIF3I; module B is composed of EIF3F, EIF3H, and EIF3M; and module C is composed of EIF3C, EIF3D, EIF3E, EIF3K and EIF3L. EIF3C of module C binds EIF3B of module A and EIF3H of module B, thereby linking the three modules. EIF3J is a labile subunit that binds to the eIF-3 complex via EIF3B. The eIF-3 complex interacts with RPS6KB1 under conditions of nutrient depletion. Mitogenic stimulation leads to binding and activation of a complex composed of MTOR and RPTOR, leading to phosphorylation and release of RPS6KB1 and binding of EIF4B to eIF-3. Phosphorylated. Phosphorylation is enhanced upon serum stimulation.

The protein resides in the cytoplasm. Component of the eukaryotic translation initiation factor 3 (eIF-3) complex, which is required for several steps in the initiation of protein synthesis. The eIF-3 complex associates with the 40S ribosome and facilitates the recruitment of eIF-1, eIF-1A, eIF-2:GTP:methionyl-tRNAi and eIF-5 to form the 43S pre-initiation complex (43S PIC). The eIF-3 complex stimulates mRNA recruitment to the 43S PIC and scanning of the mRNA for AUG recognition. The eIF-3 complex is also required for disassembly and recycling of post-termination ribosomal complexes and subsequently prevents premature joining of the 40S and 60S ribosomal subunits prior to initiation. The eIF-3 complex specifically targets and initiates translation of a subset of mRNAs involved in cell proliferation, including cell cycling, differentiation and apoptosis, and uses different modes of RNA stem-loop binding to exert either translational activation or repression. This subunit binds directly within the mRNA entry channel of the 40S ribosome to the aminoacyl (A) site. It may regulate the interaction between the 43S PIC and mRNA. The sequence is that of Eukaryotic translation initiation factor 3 subunit J from Bos taurus (Bovine).